Reading from the N-terminus, the 595-residue chain is Inactive metallocarboxypeptidase ecm14 (595 aa).

Positions 1-22 (MYRPDHVFVILCAVFFTGQVTA) are cleaved as a signal peptide. The propeptide occupies 23-178 (VPAGTGITHP…MIYESQYPSR (156 aa)). Positions 206 to 527 (NYQPFPVILQ…NSVLVLGHFL (322 aa)) constitute a Peptidase M14 domain. Zn(2+)-binding residues include H270 and E273. Substrate-binding positions include 270 to 273 (HARE), R328, and 345 to 346 (DR). The cysteines at positions 339 and 362 are disulfide-linked. The N-linked (GlcNAc...) asparagine glycan is linked to N386. H402 provides a ligand contact to Zn(2+). A substrate-binding site is contributed by 403 to 404 (SY).

The protein belongs to the peptidase M14 family. Zn(2+) is required as a cofactor.

It is found in the vacuole. Its subcellular location is the secreted. In terms of biological role, inactive carboxypeptidase that may play a role in cell wall organization and biogenesis. This is Inactive metallocarboxypeptidase ecm14 (ecm14) from Talaromyces marneffei (strain ATCC 18224 / CBS 334.59 / QM 7333) (Penicillium marneffei).